Reading from the N-terminus, the 600-residue chain is Aspartate--tRNA(Asp/Asn) ligase (600 aa).

Glu174 lines the L-aspartate pocket. Positions 198-201 (QLFK) are aspartate. Arg220 lines the L-aspartate pocket. ATP contacts are provided by residues 220–222 (RDE) and Gln229. His457 provides a ligand contact to L-aspartate. Glu491 is a binding site for ATP. Position 498 (Arg498) interacts with L-aspartate. 543–546 (GLDR) provides a ligand contact to ATP.

It belongs to the class-II aminoacyl-tRNA synthetase family. Type 1 subfamily. In terms of assembly, homodimer.

It localises to the cytoplasm. The catalysed reaction is tRNA(Asx) + L-aspartate + ATP = L-aspartyl-tRNA(Asx) + AMP + diphosphate. Aspartyl-tRNA synthetase with relaxed tRNA specificity since it is able to aspartylate not only its cognate tRNA(Asp) but also tRNA(Asn). Reaction proceeds in two steps: L-aspartate is first activated by ATP to form Asp-AMP and then transferred to the acceptor end of tRNA(Asp/Asn). This chain is Aspartate--tRNA(Asp/Asn) ligase, found in Burkholderia vietnamiensis (strain G4 / LMG 22486) (Burkholderia cepacia (strain R1808)).